The sequence spans 1357 residues: DNA-directed RNA polymerase subunit beta (1357 aa).

The protein belongs to the RNA polymerase beta chain family. As to quaternary structure, the RNAP catalytic core consists of 2 alpha, 1 beta, 1 beta' and 1 omega subunit. When a sigma factor is associated with the core the holoenzyme is formed, which can initiate transcription.

The catalysed reaction is RNA(n) + a ribonucleoside 5'-triphosphate = RNA(n+1) + diphosphate. Its function is as follows. DNA-dependent RNA polymerase catalyzes the transcription of DNA into RNA using the four ribonucleoside triphosphates as substrates. This is DNA-directed RNA polymerase subunit beta from Pseudomonas putida (strain GB-1).